Consider the following 64-residue polypeptide: Drosocin antimicrobial peptides (64 aa).

The signal sequence occupies residues 1-19; it reads MKFTIVFLLLACVFAMAVA. Residues 20–21 constitute a propeptide that is removed on maturation; sequence TP. Residue Ser-28 is glycosylated (O-linked (GalNAc...) serine). Thr-32 carries an O-linked (GalNAc...) threonine glycan. Residues 32–40 form a critical for inhibition of translation, possibly due to its role in mediating interactions with bacterial 23S rRNA and peptide chain release factors region; the sequence is TSHPRPIRV.

It belongs to the drosocin family. As to quaternary structure, associates with the bacterial 50S ribosomal complex, occupying the nascent peptide exit tunnel. Interacts with bacterial 23S rRNA; this interaction is direct. Interacts with bacterial rplV/50S ribosomal protein L22; this interaction is direct. Interacts with bacterial prfA/peptide chain release factor RF1; while associated with the bacterial 50S ribosomal complex, this interaction is direct and traps RF1 on the ribosome, inhibiting further translation. Proteolytically cleaved at a pair of basic residues corresponding to the RXK/RR optimal cleavage site for furin proteases to produce two distinct antibacterial peptides. In terms of processing, O-glycosylated. O-glycosylation may be required for efficient uptake by target bacterial cells. Monosaccharide modification of Thr-32 provides better antibacterial activity than disaccharide modification or no modification. O-glycosylation of Thr-32 is not essential for antimicrobial activity but enhances this activity by mediating interactions with the 23S rRNA and increasing the efficiency of translation inhibition.

The protein resides in the secreted. Its function is as follows. Antibacterial peptide with strong anti-Gram-negative bacteria activity. Significantly contributes to antibacterial activity against Enterobacter cloacae but not Providencia burhodogranariea. Inhibitor of bacterial translation machinery that targets translation termination in a prfA- or prfB-dependent manner. Binds within the nascent peptide exit tunnel of the bacterial large ribosomal subunit, potentially interfering with nascent chain translocation that occurs post-peptide bond formation. Binds prfA/RF1 (and potentially prfB/RF2), trapping it on the ribosome after release of the nascent polypeptide chain and preventing further translation. The resulting depletion of peptide chain release factors further disrupts bacterial translation by preventing ribosomal peptide chain release and inducing stop codon readthrough. Entry into target Escherichia coli cells requires the bacterial peptide antibiotic transporter sbmA. In terms of biological role, peptide with significant antibacterial activity against Providencia burhodogranariea but not Enterobacter cloacae. In Drosophila simulans (Fruit fly), this protein is Drosocin antimicrobial peptides (Dro).